Consider the following 456-residue polypeptide: Chromosomal replication initiator protein DnaA (456 aa).

The segment at 1–83 (MKLKILHFTS…DAFEEESNNG (83 aa)) is domain I, interacts with DnaA modulators. Positions 83–116 (GVRPEIHIKVKEKKENVKSLKNNKSMLYFNTNGL) are domain II. The segment at 117–331 (SLNPFYTFEN…GILSTINAHI (215 aa)) is domain III, AAA+ region. Positions 161, 163, 164, and 165 each coordinate ATP. Residues 332–456 (NLSPESSSLK…SKIQQSLDSV (125 aa)) form a domain IV, binds dsDNA region.

The protein belongs to the DnaA family. In terms of assembly, oligomerizes as a right-handed, spiral filament on DNA at oriC.

It is found in the cytoplasm. In terms of biological role, plays an essential role in the initiation and regulation of chromosomal replication. ATP-DnaA binds to the origin of replication (oriC) to initiate formation of the DNA replication initiation complex once per cell cycle. Binds the DnaA box (a 9 base pair repeat at the origin) and separates the double-stranded (ds)DNA. Forms a right-handed helical filament on oriC DNA; dsDNA binds to the exterior of the filament while single-stranded (ss)DNA is stabiized in the filament's interior. The ATP-DnaA-oriC complex binds and stabilizes one strand of the AT-rich DNA unwinding element (DUE), permitting loading of DNA polymerase. After initiation quickly degrades to an ADP-DnaA complex that is not apt for DNA replication. Binds acidic phospholipids. This is Chromosomal replication initiator protein DnaA from Helicobacter hepaticus (strain ATCC 51449 / 3B1).